Reading from the N-terminus, the 132-residue chain is MDVTRLLLATLLVFLCFFTAYSHPPPEEKLRDDRSLRSNSSVNLLDFPSVSIVALNKKSKQISRKEAEKKRSSKKEASMKKVARPRTPLSAPCVATRDSCKPPAPACCDPCASCQCRFFRSACSCRVLSLNC.

The signal sequence occupies residues 1-22 (MDVTRLLLATLLVFLCFFTAYS). Residue asparagine 39 is glycosylated (N-linked (GlcNAc...) asparagine). The interval 62-88 (ISRKEAEKKRSSKKEASMKKVARPRTP) is disordered. Over residues 63–79 (SRKEAEKKRSSKKEASM) the composition is skewed to basic and acidic residues. Intrachain disulfides connect cysteine 93–cysteine 108, cysteine 100–cysteine 114, cysteine 107–cysteine 125, cysteine 111–cysteine 132, and cysteine 116–cysteine 123. In terms of domain architecture, Agouti spans 93-132 (CVATRDSCKPPAPACCDPCASCQCRFFRSACSCRVLSLNC).

It is found in the secreted. Functionally, involved in the regulation of melanogenesis. The binding of ASP to MC1R precludes alpha-MSH initiated signaling and thus blocks production of cAMP, leading to a down-regulation of eumelanogenesis (brown/black pigment) and thus increasing synthesis of pheomelanin (yellow/red pigment). The protein is Agouti-signaling protein (ASIP) of Macaca radiata (Bonnet macaque).